We begin with the raw amino-acid sequence, 258 residues long: MDDDLTEYAPDIPDNVLELIFSYLKLQDLRNCALVCKSWHRFLSDENNEVWRAQCMQKLSPDAFKTDLLSVVPTYKAKLRAFFHAWNPYDCSRHVYIKPNGFTLHRNPVAQSTDGSRGKIGFQHGRHAWEVRWEGPLGTVAVVGIATKDAAIQCHGYYALLGADDQSWGWNLVDNLLLHNGDAHGIYPLLNNAPKYKVGERIRVILDCDDNTLSFEKNYEFLGVAFTDLPDKVFYPTVAAVYGNTEISMVYLGPPLDG.

In terms of domain architecture, F-box spans 6-54; it reads TEYAPDIPDNVLELIFSYLKLQDLRNCALVCKSWHRFLSDENNEVWRAQ. In terms of domain architecture, B30.2/SPRY spans 64–256; that stretch reads FKTDLLSVVP…ISMVYLGPPL (193 aa).

Belongs to the FBXO45/Fsn family. Component of an E3 ubiquitin ligase complex composed of hiw and Fsn.

Its subcellular location is the synapse. The protein operates within protein modification; protein ubiquitination. In terms of biological role, required in the presynaptic motoneuron to down-regulate the levels of wnd and restrain synaptic terminal growth at the neuromuscular junction (NMJ). This is F-box/SPRY domain-containing protein 1 from Culex quinquefasciatus (Southern house mosquito).